Reading from the N-terminus, the 714-residue chain is Polyribonucleotide nucleotidyltransferase (714 aa).

The Mg(2+) site is built by aspartate 496 and aspartate 502. The 60-residue stretch at 562–621 (PRLLTIKIDPDLIGMVIGPGGKTIKGITEQTRAKVDIADDGTVTIASSESENAEKAKRLI) folds into the KH domain. Residues 631-699 (GDVYFGKVTR…NKGRINLTRL (69 aa)) form the S1 motif domain.

This sequence belongs to the polyribonucleotide nucleotidyltransferase family. It depends on Mg(2+) as a cofactor.

The protein resides in the cytoplasm. The catalysed reaction is RNA(n+1) + phosphate = RNA(n) + a ribonucleoside 5'-diphosphate. In terms of biological role, involved in mRNA degradation. Catalyzes the phosphorolysis of single-stranded polyribonucleotides processively in the 3'- to 5'-direction. This is Polyribonucleotide nucleotidyltransferase from Picosynechococcus sp. (strain ATCC 27264 / PCC 7002 / PR-6) (Agmenellum quadruplicatum).